Consider the following 427-residue polypeptide: Tol-Pal system protein TolB (427 aa).

The first 23 residues, 1–23 (MKLLKRLVSVFAIVLAVGSNAFA), serve as a signal peptide directing secretion.

It belongs to the TolB family. In terms of assembly, the Tol-Pal system is composed of five core proteins: the inner membrane proteins TolA, TolQ and TolR, the periplasmic protein TolB and the outer membrane protein Pal. They form a network linking the inner and outer membranes and the peptidoglycan layer.

It localises to the periplasm. In terms of biological role, part of the Tol-Pal system, which plays a role in outer membrane invagination during cell division and is important for maintaining outer membrane integrity. The sequence is that of Tol-Pal system protein TolB from Haemophilus influenzae (strain PittGG).